The chain runs to 799 residues: Heat shock protein 90-6, mitochondrial (799 aa).

A mitochondrion-targeting transit peptide spans methionine 1–tyrosine 48. Residues alanine 23–alanine 35 are compositionally biased toward low complexity. The segment at alanine 23 to serine 61 is disordered. Over residues arginine 46–serine 61 the composition is skewed to polar residues. Residues glutamate 124, asparagine 128, aspartate 170, methionine 175, serine 190–glycine 191, glutamine 214–phenylalanine 219, and threonine 269 contribute to the ATP site. The disordered stretch occupies residues glutamate 314 to lysine 337. Residues threonine 322–glutamate 334 show a composition bias toward basic and acidic residues. Arginine 464 is a binding site for ATP. The segment covering serine 766–alanine 777 has biased composition (polar residues). Residues serine 766–lysine 799 are disordered. A compositionally biased stretch (acidic residues) spans threonine 784 to lysine 799.

The protein belongs to the heat shock protein 90 family. In terms of assembly, interacts with P23-1.

The protein localises to the mitochondrion. Functionally, molecular chaperone which stabilizes unfolding protein intermediates and functions as a folding molecular chaperone that assists the non-covalent folding of proteins in an ATP-dependent manner. The protein is Heat shock protein 90-6, mitochondrial of Arabidopsis thaliana (Mouse-ear cress).